We begin with the raw amino-acid sequence, 204 residues long: MSRGALIVFEGLDKSGKTTQCMNIMESIPANTIKYLNFPQRSTVTGKMIDDYLTRKKTYNDHIVNLLFCANRWEFASFIQEQLEQGITLIVDRYAFSGVAYAAAKGASMTLSKSYESGLPKPDLVIFLESGSKEINRNVGEEIYEDVTFQQKVLQEYKKMIEEGDIHWQIISSEFEEDVKKELIKNIVIEAIHTVTGPVGQLWM.

Position 11-18 (11-18 (GLDKSGKT)) interacts with ATP.

This sequence belongs to the thymidylate kinase family.

It carries out the reaction dTMP + ATP = dTDP + ADP. The protein operates within pyrimidine metabolism; dTTP biosynthesis. The sequence is that of Thymidylate kinase (TMK) from Vaccinia virus (strain Ankara) (VACV).